We begin with the raw amino-acid sequence, 501 residues long: Solute carrier family 2, facilitated glucose transporter member 5 (501 aa).

Position 1 is an N-acetylmethionine (Met-1). Residues Met-1–Ala-18 are Cytoplasmic-facing. The chain crosses the membrane as a helical span at residues Leu-19–Val-39. Tyr-32 contacts D-fructose. Topologically, residues Asn-40–Thr-68 are extracellular. N-linked (GlcNAc...) asparagine glycosylation occurs at Asn-51. A helical transmembrane segment spans residues Leu-69 to Pro-91. Residues Leu-92–Arg-98 lie on the Cytoplasmic side of the membrane. A helical membrane pass occupies residues Lys-99 to Ser-119. The Extracellular portion of the chain corresponds to Lys-120–Glu-126. A helical membrane pass occupies residues Met-127–Tyr-149. Over Leu-150 to Ala-161 the chain is Cytoplasmic. Residues Leu-162–Leu-182 form a helical membrane-spanning segment. Gln-167 contacts D-fructose. The Extracellular portion of the chain corresponds to Arg-183–Trp-192. Residues Pro-193–Phe-213 form a helical membrane-spanning segment. At Pro-214–Gln-277 the chain is on the cytoplasmic side. Residues Val-278–Tyr-298 form a helical membrane-spanning segment. D-fructose-binding positions include Gln-288 and Ile-296–Tyr-298. Topologically, residues Tyr-299–Asp-313 are extracellular. Residues Val-314 to Phe-334 traverse the membrane as a helical segment. Over Val-335–Arg-342 the chain is Cytoplasmic. The chain crosses the membrane as a helical span at residues Ala-343 to Leu-363. Residues Ala-364–Trp-371 lie on the Extracellular side of the membrane. A helical membrane pass occupies residues Met-372–Ile-394. A D-fructose-binding site is contributed by His-387. Over Pro-395 to Tyr-412 the chain is Cytoplasmic. Residues Met-413–Ile-433 form a helical membrane-spanning segment. His-419 to Trp-420 contributes to the D-fructose binding site. Topologically, residues Gln-434–Ala-439 are extracellular. Residues Tyr-440–Val-460 traverse the membrane as a helical segment. Over Pro-461–Leu-501 the chain is Cytoplasmic.

Belongs to the major facilitator superfamily. Sugar transporter (TC 2.A.1.1) family. Glucose transporter subfamily.

Its subcellular location is the apical cell membrane. The protein resides in the cell membrane. The protein localises to the sarcolemma. It catalyses the reaction D-fructose(out) = D-fructose(in). Its function is as follows. Functions as a fructose transporter that has only low activity with other monosaccharides. Can mediate the uptake of deoxyglucose, but with low efficiency. Essential for fructose uptake in the small intestine. Plays a role in the regulation of salt uptake and blood pressure in response to dietary fructose. Required for the development of high blood pressure in response to high dietary fructose intake. The polypeptide is Solute carrier family 2, facilitated glucose transporter member 5 (Equus caballus (Horse)).